A 292-amino-acid polypeptide reads, in one-letter code: 33 kDa chaperonin (292 aa).

Cystine bridges form between Cys230/Cys232 and Cys263/Cys266.

Belongs to the HSP33 family. In terms of processing, under oxidizing conditions two disulfide bonds are formed involving the reactive cysteines. Under reducing conditions zinc is bound to the reactive cysteines and the protein is inactive.

It is found in the cytoplasm. Functionally, redox regulated molecular chaperone. Protects both thermally unfolding and oxidatively damaged proteins from irreversible aggregation. Plays an important role in the bacterial defense system toward oxidative stress. This Salmonella typhi protein is 33 kDa chaperonin.